Reading from the N-terminus, the 331-residue chain is ADP-L-glycero-D-manno-heptose-6-epimerase (331 aa).

NADP(+) is bound by residues 11–12, 32–33, K39, K54, 75–79, and N92; these read FI, DN, and EGACS. Y139 functions as the Proton acceptor in the catalytic mechanism. K143 contributes to the NADP(+) binding site. N168 is a binding site for substrate. 2 residues coordinate NADP(+): V169 and K177. Catalysis depends on K177, which acts as the Proton acceptor. Substrate contacts are provided by residues R179, H186, 200 to 203, R213, and Y292; that span reads FGEY.

Belongs to the NAD(P)-dependent epimerase/dehydratase family. HldD subfamily. Homopentamer. The cofactor is NADP(+).

The catalysed reaction is ADP-D-glycero-beta-D-manno-heptose = ADP-L-glycero-beta-D-manno-heptose. It participates in nucleotide-sugar biosynthesis; ADP-L-glycero-beta-D-manno-heptose biosynthesis; ADP-L-glycero-beta-D-manno-heptose from D-glycero-beta-D-manno-heptose 7-phosphate: step 4/4. Functionally, catalyzes the interconversion between ADP-D-glycero-beta-D-manno-heptose and ADP-L-glycero-beta-D-manno-heptose via an epimerization at carbon 6 of the heptose. This chain is ADP-L-glycero-D-manno-heptose-6-epimerase, found in Ralstonia pickettii (strain 12J).